A 273-amino-acid chain; its full sequence is Dermonecrotic toxin LruSicTox-alphaIC1d (273 aa).

Residue His5 is part of the active site. 2 residues coordinate Mg(2+): Glu25 and Asp27. His41 serves as the catalytic Nucleophile. 2 cysteine pairs are disulfide-bonded: Cys45/Cys51 and Cys47/Cys190. Asp85 serves as a coordination point for Mg(2+).

The protein belongs to the arthropod phospholipase D family. Class II subfamily. It depends on Mg(2+) as a cofactor. In terms of tissue distribution, expressed by the venom gland.

Its subcellular location is the secreted. The catalysed reaction is an N-(acyl)-sphingosylphosphocholine = an N-(acyl)-sphingosyl-1,3-cyclic phosphate + choline. The enzyme catalyses an N-(acyl)-sphingosylphosphoethanolamine = an N-(acyl)-sphingosyl-1,3-cyclic phosphate + ethanolamine. It carries out the reaction a 1-acyl-sn-glycero-3-phosphocholine = a 1-acyl-sn-glycero-2,3-cyclic phosphate + choline. It catalyses the reaction a 1-acyl-sn-glycero-3-phosphoethanolamine = a 1-acyl-sn-glycero-2,3-cyclic phosphate + ethanolamine. In terms of biological role, dermonecrotic toxins cleave the phosphodiester linkage between the phosphate and headgroup of certain phospholipids (sphingolipid and lysolipid substrates), forming an alcohol (often choline) and a cyclic phosphate. This toxin acts on sphingomyelin (SM). It may also act on ceramide phosphoethanolamine (CPE), lysophosphatidylcholine (LPC) and lysophosphatidylethanolamine (LPE), but not on lysophosphatidylserine (LPS), and lysophosphatidylglycerol (LPG). It acts by transphosphatidylation, releasing exclusively cyclic phosphate products as second products. Induces dermonecrosis, hemolysis, increased vascular permeability, edema, inflammatory response, and platelet aggregation. The polypeptide is Dermonecrotic toxin LruSicTox-alphaIC1d (Loxosceles rufescens (Mediterranean recluse spider)).